The primary structure comprises 208 residues: Peptidyl-prolyl cis-trans isomerase FKBP13, chloroplastic (208 aa).

2 cysteine pairs are disulfide-bonded: cysteine 84–cysteine 96 and cysteine 185–cysteine 190. Positions 109-208 (GQLIKAHYVG…LFDIEYIGKA (100 aa)) constitute a PPIase FKBP-type domain.

Belongs to the FKBP-type PPIase family. As to quaternary structure, interacts in vitro with LTO1. The precursor, but not the mature form of the protein, interacts with the Rieske protein. As to expression, expressed in stems, leaves and developing flower buds, but not in roots.

It localises to the plastid. Its subcellular location is the chloroplast thylakoid lumen. It carries out the reaction [protein]-peptidylproline (omega=180) = [protein]-peptidylproline (omega=0). Its activity is regulated as follows. PPIase activity is optimal in oxidized form (S-S) and minimal in reduced form (SH). Reduction of the oxidized form is mediated by thioredoxin (TRX-M). PPIases accelerate the folding of proteins. It catalyzes the cis-trans isomerization of proline imidic peptide bonds in oligopeptides. Responsive of the major PPIase activity in the chloroplast thylakoid lumen. Regulates the accumulation of Rieske protein, an essential component of the photosynthetic electron transport chain. The chain is Peptidyl-prolyl cis-trans isomerase FKBP13, chloroplastic from Arabidopsis thaliana (Mouse-ear cress).